The chain runs to 1284 residues: Collagen alpha-1(XX) chain (1284 aa).

The first 22 residues, 1–22 (MSSGDPAHLGLCLWLWLGATLG), serve as a signal peptide directing secretion. The 92-residue stretch at 28–119 (ASGLLRLAVL…EFVIEDLKSS (92 aa)) folds into the Fibronectin type-III 1 domain. A disordered region spans residues 122-171 (DRSSQRPLGSGAPEPTPSHTGSPDPEQASEPQVAFTPSQDPRTPAGPQFR). Residues 179–354 (DMVFLVDGSW…GALAGLLSRL (176 aa)) enclose the VWFA domain. Fibronectin type-III domains lie at 379-468 (APTS…APLP), 469-559 (PPRA…TLAP), 560-647 (PRHL…TKKA), 649-738 (SPSQ…TPST), and 743-833 (PPSN…ACPA). Asparagine 607 carries an N-linked (GlcNAc...) asparagine glycan. Residues 842-1037 (GFDLMVAFSL…LQMLQIVCSD (196 aa)) form the Laminin G-like domain. 2 disordered regions span residues 1065–1190 (SCSS…EKGE) and 1212–1284 (SFHE…GLWE). A compositionally biased stretch (pro residues) spans 1071 to 1082 (PGPPGPQGPPGL). 2 Collagen-like domains span residues 1071–1127 (PGPP…IPGR) and 1133–1190 (PKGM…EKGE). Low complexity-rich tracts occupy residues 1112–1125 (LPGL…QGIP) and 1166–1181 (ERGP…LPGP). Over residues 1271–1284 (SPGQQGASTQGLWE) the composition is skewed to polar residues.

In terms of tissue distribution, high expression in heart, lung, liver, skeletal muscle, kidney, pancreas, spleen, testis, ovary, subthalamic nucleus and fetal liver. Weak expression in other tissues tested.

It is found in the secreted. It localises to the extracellular space. Functionally, probable collagen protein. In Homo sapiens (Human), this protein is Collagen alpha-1(XX) chain (COL20A1).